Here is a 404-residue protein sequence, read N- to C-terminus: Glucose-1-phosphate adenylyltransferase (404 aa).

Alpha-D-glucose 1-phosphate-binding positions include Tyr99, Gly164, 179–180 (EK), and Ser197.

It belongs to the bacterial/plant glucose-1-phosphate adenylyltransferase family.

It catalyses the reaction alpha-D-glucose 1-phosphate + ATP + H(+) = ADP-alpha-D-glucose + diphosphate. It functions in the pathway capsule biogenesis; capsule polysaccharide biosynthesis. Its pathway is glycan biosynthesis; glycogen biosynthesis. In terms of biological role, involved in the biosynthesis of ADP-glucose, a building block, required in the biosynthesis of maltose-1-phosphate (M1P) and in the elongation reactions to produce linear alpha-1,4-glucans. Catalyzes the reaction between ATP and alpha-D-glucose 1-phosphate (G1P) to produce pyrophosphate and ADP-Glc. The polypeptide is Glucose-1-phosphate adenylyltransferase (Mycobacterium marinum (strain ATCC BAA-535 / M)).